Reading from the N-terminus, the 2032-residue chain is Cytoskeleton-associated protein 5 (2032 aa).

3 TOG regions span residues M1–T223, Y268–G502, and S588–P817. Position 48 is an N6-acetyllysine (K48). 3 HEAT repeats span residues I159–D197, G356–L394, and K434–E472. The tract at residues H501–T579 is disordered. One copy of the HEAT 4 repeat lies at E750–P788. The tract at residues K811–V848 is disordered. A Phosphoserine modification is found at S816. The segment covering D833 to G842 has biased composition (acidic residues). 2 TOG regions span residues P853 to P1081 and I1193 to S1428. HEAT repeat units lie at residues I855–F893, R936–M974, and P1013–Y1051. Low complexity predominate over residues A1078–M1095. A disordered region spans residues A1078–K1156. HEAT repeat units lie at residues E1284–A1322, K1324–M1357, and Q1361–D1399. The disordered stretch occupies residues I1420–D1459. Polar residues predominate over residues R1441–N1450. The residue at position 1469 (S1469) is a Phosphoserine. A disordered region spans residues S1801–E1822. A compositionally biased stretch (basic and acidic residues) spans K1808–E1822. At S1861 the chain carries Phosphoserine. 2 disordered regions span residues S1893 to N1926 and L1948 to K2032. The segment covering V1909–S1921 has biased composition (low complexity). The interaction with TACC3 stretch occupies residues P1932 to P1957. Over residues A1972–S1983 the composition is skewed to polar residues. Positions Q1984 to L1997 are enriched in basic and acidic residues. Positions T2002–T2015 are enriched in low complexity. Positions D2018–K2032 are enriched in basic and acidic residues.

The protein belongs to the TOG/XMAP215 family. In terms of assembly, interacts with TACC1. Interacts with HNRNPA2B1. Interacts with TACC3 independently of clathrin. Interacts with TACC3 and clathrin forming the TACC3/ch-TOG/clathrin complex located at spindle inter-microtubules bridges. Interacts with NDC80; indicative for an association with the NDC80 complex. Interacts with SLAIN2. Interacts with SLAIN1.

The protein localises to the cytoplasm. It is found in the cytoskeleton. The protein resides in the microtubule organizing center. Its subcellular location is the centrosome. It localises to the spindle pole. The protein localises to the spindle. It is found in the chromosome. The protein resides in the centromere. Its subcellular location is the kinetochore. Its function is as follows. Binds to the plus end of microtubules and regulates microtubule dynamics and microtubule organization. Acts as a processive microtubule polymerase. Promotes cytoplasmic microtubule nucleation and elongation. Plays a major role in organizing spindle poles. In spindle formation protects kinetochore microtubules from depolymerization by KIF2C and has an essential role in centrosomal microtubule assembly independently of KIF2C activity. Contributes to centrosome integrity. Acts as a component of the TACC3/ch-TOG/clathrin complex proposed to contribute to stabilization of kinetochore fibers of the mitotic spindle by acting as inter-microtubule bridge. The TACC3/ch-TOG/clathrin complex is required for the maintenance of kinetochore fiber tension. Enhances the strength of NDC80 complex-mediated kinetochore-tip microtubule attachments. The chain is Cytoskeleton-associated protein 5 from Mus musculus (Mouse).